A 298-amino-acid chain; its full sequence is Tyrosine recombinase XerC (298 aa).

The Core-binding (CB) domain occupies Thr-2 to Val-88. One can recognise a Tyr recombinase domain in the interval His-109–Asp-288. Active-site residues include Arg-148, Lys-172, His-240, Arg-243, and His-266. The active-site O-(3'-phospho-DNA)-tyrosine intermediate is Tyr-275.

It belongs to the 'phage' integrase family. XerC subfamily. Forms a cyclic heterotetrameric complex composed of two molecules of XerC and two molecules of XerD, in which XerC interacts with XerD via its C-terminal region, XerD interacts with XerC via its C-terminal region and so on.

It is found in the cytoplasm. FtsK may regulate the catalytic switch between XerC and XerD in the heterotetrameric complex during the two steps of the recombination process. Its function is as follows. Site-specific tyrosine recombinase, which acts by catalyzing the cutting and rejoining of the recombining DNA molecules. Binds cooperatively to specific DNA consensus sequences that are separated from XerD binding sites by a short central region, forming the heterotetrameric XerC-XerD complex that recombines DNA substrates. The complex is essential to convert dimers of the bacterial chromosome into monomers to permit their segregation at cell division. It also contributes to the segregational stability of plasmids. In the complex XerC specifically exchanges the top DNA strands. The polypeptide is Tyrosine recombinase XerC (Escherichia coli (strain 55989 / EAEC)).